Reading from the N-terminus, the 511-residue chain is D-alanine--D-alanyl carrier protein ligase (511 aa).

An ATP-binding site is contributed by 152–153 (TS). Aspartate 199 serves as a coordination point for D-alanine. 294 to 299 (NAYGPT) contacts ATP. Residue valine 303 coordinates D-alanine. ATP contacts are provided by residues aspartate 385, 397-400 (YGGR), and lysine 499. Residue lysine 499 coordinates D-alanine.

The protein belongs to the ATP-dependent AMP-binding enzyme family. DltA subfamily.

The protein resides in the cytoplasm. The catalysed reaction is holo-[D-alanyl-carrier protein] + D-alanine + ATP = D-alanyl-[D-alanyl-carrier protein] + AMP + diphosphate. It participates in cell wall biogenesis; lipoteichoic acid biosynthesis. Its function is as follows. Catalyzes the first step in the D-alanylation of lipoteichoic acid (LTA), the activation of D-alanine and its transfer onto the D-alanyl carrier protein (Dcp) DltC. In an ATP-dependent two-step reaction, forms a high energy D-alanyl-AMP intermediate, followed by transfer of the D-alanyl residue as a thiol ester to the phosphopantheinyl prosthetic group of the Dcp. D-alanylation of LTA plays an important role in modulating the properties of the cell wall in Gram-positive bacteria, influencing the net charge of the cell wall. This chain is D-alanine--D-alanyl carrier protein ligase, found in Streptococcus agalactiae serotype III (strain NEM316).